Reading from the N-terminus, the 396-residue chain is MTKTIAINAGSSSLKWQLYLMPEEKVLAKGLIERIGLKDSISTVKFDGRSEQQILDIENHTQAVKILLDDLIRFDIIKAYDEITGVGHRVVAGGEYFKESTVVEGDVLEKVEELSLLAPLHNPANAAGVRAFKELLPDITSVVVFDTSFHTSMPEKAYRYPLPTKYYTENKVRKYGAHGTSHQFVAGEAAKLLGRPLEDLKLITCHIGNGGSITAVKAGKSVDTSMGFTPLGGIMMGTRTGDIDPAIIPYLMQYTEDFNTPEDISRVLNRESGLLGVSANSSDMRDIEAAVAEGNHEASLAYEMYVDRIQKHIGQYLAVLNGADAIVFTAGVGENAESFRRDVISGISWFGCDVDDEKNVFGVTGDISTEAAKIRVLVIPTDEELVIARDVERLKK.

Asn8 serves as a coordination point for Mg(2+). Lys15 contributes to the ATP binding site. Arg89 contacts substrate. Asp146 acts as the Proton donor/acceptor in catalysis. Residues 206-210, 283-285, and 331-335 each bind ATP; these read HIGNG, DMR, and GVGEN. Glu383 contributes to the Mg(2+) binding site.

This sequence belongs to the acetokinase family. In terms of assembly, homodimer. The cofactor is Mg(2+). It depends on Mn(2+) as a cofactor.

The protein localises to the cytoplasm. The catalysed reaction is acetate + ATP = acetyl phosphate + ADP. It participates in metabolic intermediate biosynthesis; acetyl-CoA biosynthesis; acetyl-CoA from acetate: step 1/2. Functionally, catalyzes the formation of acetyl phosphate from acetate and ATP. Can also catalyze the reverse reaction. The sequence is that of Acetate kinase from Streptococcus pneumoniae (strain ATCC 700669 / Spain 23F-1).